The primary structure comprises 263 residues: Retinoic acid early transcript 1E (263 aa).

The N-terminal stretch at Met1–Gly30 is a signal peptide. Residues His31 to Asp116 are MHC class I alpha-1 like; down-regulates the cell surface expression of KLRK1. At His31–Asp225 the chain is on the extracellular side. 3 N-linked (GlcNAc...) asparagine glycosylation sites follow: Asn36, Asn154, and Asn212. The tract at residues Pro117–Thr207 is MHC class I alpha-2 like; down-regulates the cell surface expression of KLRK1. Cysteines 126 and 189 form a disulfide. Residues Arg226–Trp248 traverse the membrane as a helical segment. At Gln249–Ser263 the chain is on the cytoplasmic side.

It belongs to the MHC class I family. In terms of assembly, binds to KLRK1/NKG2D. (Microbial infection) Contrary to other family members, does not interact with CMV glycoprotein UL16. As to expression, predominantly expressed in the skin, but also expressed in testis and trachea. Up-regulated in tumor cells of different origins. Expression progressively decreased after treatment of tumor cells with retinoic acid.

The protein resides in the membrane. It is found in the secreted. In terms of biological role, binds and activates the KLRK1/NKG2D receptor, mediating natural killer cell cytotoxicity. The protein is Retinoic acid early transcript 1E of Homo sapiens (Human).